The primary structure comprises 393 residues: Aspartate aminotransferase (393 aa).

Residues Gly38, Trp124, and Asn174 each contribute to the L-aspartate site. Lys237 is subject to N6-(pyridoxal phosphate)lysine.

It belongs to the class-I pyridoxal-phosphate-dependent aminotransferase family. As to quaternary structure, homodimer. Requires pyridoxal 5'-phosphate as cofactor.

The protein localises to the cytoplasm. It carries out the reaction L-aspartate + 2-oxoglutarate = oxaloacetate + L-glutamate. This Geobacillus stearothermophilus (Bacillus stearothermophilus) protein is Aspartate aminotransferase (aspC).